The sequence spans 155 residues: Small ribosomal subunit protein uS10m (155 aa).

This sequence belongs to the universal ribosomal protein uS10 family. Component of the mitochondrial ribosome small subunit (28S) which comprises a 12S rRNA and about 30 distinct proteins.

It is found in the mitochondrion. This chain is Small ribosomal subunit protein uS10m (Mrps10), found in Rattus norvegicus (Rat).